The chain runs to 651 residues: Bromodomain-containing protein 7 (651 aa).

A Glycyl lysine isopeptide (Lys-Gly) (interchain with G-Cter in SUMO2) cross-link involves residue K21. A disordered region spans residues 34–103; sequence VTELSTGSSG…RDRAENEVDR (70 aa). Over residues 35–45 the composition is skewed to polar residues; the sequence is TELSTGSSGHD. Residues 47–57 show a composition bias toward basic and acidic residues; it reads SLFEDRSDHDK. Basic residues predominate over residues 58-69; that stretch reads HKDRKRKKRKKG. The short motif at 65–96 is the Nuclear localization signal element; sequence KRKKGEKQAPGEEKGRKRRRVKEDKKKRDRDR. Basic and acidic residues predominate over residues 70-103; the sequence is EKQAPGEEKGRKRRRVKEDKKKRDRDRAENEVDR. Glycyl lysine isopeptide (Lys-Gly) (interchain with G-Cter in SUMO2) cross-links involve residues K127, K186, K197, K201, K212, and K241. The region spanning 131 to 235 is the Bromo domain; the sequence is VEQTPLQEAL…HSGMKILSQE (105 aa). Positions 252–316 are disordered; the sequence is KTRKQKERTD…RSSNSEREHE (65 aa). A phosphoserine mark is found at S279 and S289. Over residues 290 to 316 the composition is skewed to basic and acidic residues; it reads PAKDNKRKDKDVLEDKWRSSNSEREHE. K305 participates in a covalent cross-link: Glycyl lysine isopeptide (Lys-Gly) (interchain with G-Cter in SUMO2). K328 bears the N6-acetyllysine mark. Residue K344 forms a Glycyl lysine isopeptide (Lys-Gly) (interchain with G-Cter in SUMO2) linkage. A Phosphoserine modification is found at S380. Residue K389 forms a Glycyl lysine isopeptide (Lys-Gly) (interchain with G-Cter in SUMO2) linkage. Phosphoserine is present on residues S475, S482, and S483. A coiled-coil region spans residues 536–567; that stretch reads SEEAEVFQRKLDETTRLLRELQEAQNERLSTR. Phosphoserine is present on S621.

As to quaternary structure, interacts with IRF2 and HNRPUL1. Interacts (via N-terminus) with TP53. Interacts (via C-terminus) with EP300. Interacts with BRCA1. Interacts (via bromo domain) with histone H3 (via N-terminus) acetylated at 'Lys-14' (H3K14ac). Has low affinity for histone H3 acetylated at 'Lys-9' (H3K9ac). Has the highest affinity for histone H3 that is acetylated both at 'Lys-9' (H3K9ac) and at 'Lys-14' (H3K14ac). Has very low affinity for non-acetylated histone H3. Interacts (via bromo domain) with histone H4 (via N-terminus) acetylated at 'Lys-8' (H3K8ac) (in vitro). Interacts with TRIM24, PTPN13 and DVL1. Identified in a complex with SMARCA4/BRG1, SMARCC1/BAF155, SMARCE1/BAF57, DPF2/BAF45D and ARID2, subunits of the SWI/SNF-B (PBAF) chromatin remodeling complex. In terms of tissue distribution, ubiquitous.

Its subcellular location is the nucleus. It is found in the chromosome. Its function is as follows. Acts both as coactivator and as corepressor. May play a role in chromatin remodeling. Transcriptional corepressor that down-regulates the expression of target genes. Binds to target promoters, leading to increased histone H3 acetylation at 'Lys-9' (H3K9ac). Binds to the ESR1 promoter. Recruits BRCA1 and POU2F1 to the ESR1 promoter. Coactivator for TP53-mediated activation of transcription of a set of target genes. Required for TP53-mediated cell-cycle arrest in response to oncogene activation. Promotes acetylation of TP53 at 'Lys-382', and thereby promotes efficient recruitment of TP53 to target promoters. Inhibits cell cycle progression from G1 to S phase. Activator of the Wnt signaling pathway in a DVL1-dependent manner by negatively regulating the GSK3B phosphotransferase activity. Induces dephosphorylation of GSK3B at 'Tyr-216'. Down-regulates TRIM24-mediated activation of transcriptional activation by AR. The sequence is that of Bromodomain-containing protein 7 (Brd7) from Mus musculus (Mouse).